Here is a 758-residue protein sequence, read N- to C-terminus: Spastin (758 aa).

Positions 1 to 103 (MVRTKNQSSS…SPRSGHHHSY (103 aa)) are disordered. Topologically, residues 1-121 (MVRTKNQSSS…KQNLYVVSFP (121 aa)) are cytoplasmic. Residues 1 to 210 (MVRTKNQSSS…RPIQPLEMAA (210 aa)) are required for localization to punctate cytoplasmic foci. Composition is skewed to low complexity over residues 8-28 (SSSSSASSSSTKSPIKSSSGA), 43-58 (RSSSASNVAAVVAGGS), 66-76 (SSNRRSPGSSP), and 85-95 (TDDLTPTTCSP). The helical intramembrane region spans 122–142 (IIFLFNVLRSLIYQLFCIFRY). Over 143 to 758 (LYGASTKVIY…WSQDYGDITI (616 aa)) the chain is Cytoplasmic. Polar residues-rich tracts occupy residues 169-180 (SKEQQQSLNHPS) and 189-198 (QEQQLSNQPQ). The disordered stretch occupies residues 169 to 202 (SKEQQQSLNHPSELNREGDGQEQQLSNQPQRFRP). The interval 208-758 (MAANRPGGGY…WSQDYGDITI (551 aa)) is sufficient for interaction with microtubules and microtubule severing. One can recognise an MIT domain in the interval 233 to 308 (HRRAFEYISK…SMARDRLHFL (76 aa)). Positions 323 to 339 (KEKQKEEARSKPQKSRE) are enriched in basic and acidic residues. The segment at 323–454 (KEKQKEEARS…GPSGSGASTP (132 aa)) is disordered. Polar residues-rich tracts occupy residues 390-406 (NKSQTLPRNLGSKTSVG) and 425-454 (QFSSGRNTPPQRSRTPINNNGPSGSGASTP). Residues 443–455 (NNGPSGSGASTPV) are required for interaction with microtubules. 523–530 (GPPGNGKT) lines the ATP pocket.

The protein belongs to the AAA ATPase family. Spastin subfamily. As to quaternary structure, homohexamer. The homohexamer is stabilized by ATP-binding. The homohexamer may adopt a ring conformation through which microtubules pass prior to being severed. Interacts with microtubules. Interacts with atl; may be involved in microtubule dynamics.

Its subcellular location is the membrane. The protein resides in the cytoplasm. It localises to the cytoskeleton. It is found in the microtubule organizing center. The protein localises to the centrosome. Its subcellular location is the chromosome. The protein resides in the lipid droplet. It catalyses the reaction n ATP + n H2O + a microtubule = n ADP + n phosphate + (n+1) alpha/beta tubulin heterodimers.. ATP-dependent microtubule severing protein. Stimulates microtubule minus-end depolymerization and poleward microtubule flux in the mitotic spindle. Regulates microtubule stability in the neuromuscular junction synapse. Involved in lipid metabolism by regulating the size and distribution of lipid droplets. Involved in axon regeneration by regulating microtubule severing. The protein is Spastin of Drosophila simulans (Fruit fly).